The chain runs to 87 residues: Small ribosomal subunit protein bS16 (87 aa).

Belongs to the bacterial ribosomal protein bS16 family.

This chain is Small ribosomal subunit protein bS16, found in Desulfatibacillum aliphaticivorans.